Consider the following 344-residue polypeptide: MVKVGIVGGTGYTGVEFLRLLAQHPQAEVVVITSRSEAGLAVADMYPNLRGHYDGLAFSVPDISTLGACDVVFFATPHGVAHALAGELLAAGTKVIDLSADFRLQDADEWAKWYGQPHGAPELLEEAVYGLPEVNREQIKQARLIAVPGCYPTATQLGFLPLLEAGLADVSRLIADCKSGVSGAGRGAAVGSLYSETSESMKAYAVKGHRHLPEIRQGLRRAAGQDVGLTFVPHLTPMIRGIHSTLYATVVDRSVDLQALFEKRYANEPFVDVMPAGSHPETRSVRGANVCRIAVHRPQDGDLVVVLSVIDNLVKGASGQAVQNMNILFGLDEKLGLSHAGMLP.

Cys150 is a catalytic residue.

This sequence belongs to the NAGSA dehydrogenase family. Type 1 subfamily.

The protein localises to the cytoplasm. The enzyme catalyses N-acetyl-L-glutamate 5-semialdehyde + phosphate + NADP(+) = N-acetyl-L-glutamyl 5-phosphate + NADPH + H(+). Its pathway is amino-acid biosynthesis; L-arginine biosynthesis; N(2)-acetyl-L-ornithine from L-glutamate: step 3/4. Catalyzes the NADPH-dependent reduction of N-acetyl-5-glutamyl phosphate to yield N-acetyl-L-glutamate 5-semialdehyde. In Pseudomonas fluorescens (strain SBW25), this protein is N-acetyl-gamma-glutamyl-phosphate reductase.